The chain runs to 230 residues: Bidirectional sugar transporter SWEET2b (230 aa).

Residues 1-6 (MDSLYD) lie on the Extracellular side of the membrane. The chain crosses the membrane as a helical span at residues 7-27 (ISCFAAGLAGNIFALALFLSP). The MtN3/slv 1 domain occupies 13 to 98 (GLAGNIFALA…CLFIFYADSR (86 aa)). Over 28–45 (VTTFKRILKAKSTERFDG) the chain is Cytoplasmic. Residues 46-66 (LPYLFSLLNCLICLWYGLPWV) traverse the membrane as a helical segment. Over 67 to 72 (ADGRLL) the chain is Extracellular. Residues 73-93 (VATVNGIGAVFQLAYICLFIF) form a helical membrane-spanning segment. Over 94 to 103 (YADSRKTRMK) the chain is Cytoplasmic. The chain crosses the membrane as a helical span at residues 104–124 (IIGLLVLVVCGFALVSHASVF). Residues 125–137 (FFDQPLRQQFVGA) are Extracellular-facing. The MtN3/slv 2 domain maps to 133 to 217 (QFVGAVSMAS…LALYAYYSRK (85 aa)). The helical transmembrane segment at 138–158 (VSMASLISMFASPLAVMGVVI) threads the bilayer. Residues 159–167 (RSESVEFMP) are Cytoplasmic-facing. The helical transmembrane segment at 168-188 (FYLSLSTFLMSASFALYGLLL) threads the bilayer. Over 189 to 190 (RD) the chain is Extracellular. A helical membrane pass occupies residues 191 to 211 (FFIYFPNGLGLILGAMQLALY). Residues 212–230 (AYYSRKWRGQDSSAPLLLA) lie on the Cytoplasmic side of the membrane.

This sequence belongs to the SWEET sugar transporter family. In terms of assembly, forms homooligomers and/or heterooligomers.

The protein localises to the cell membrane. Its function is as follows. Mediates both low-affinity uptake and efflux of sugar across the plasma membrane. The chain is Bidirectional sugar transporter SWEET2b (SWEET2B) from Oryza sativa subsp. indica (Rice).